The sequence spans 543 residues: Glutamyl-tRNA(Gln) amidotransferase subunit A, chloroplastic/mitochondrial (543 aa).

Active-site charge relay system residues include Lys-121 and Ser-196. Ser-220 acts as the Acyl-ester intermediate in catalysis.

It belongs to the amidase family. GatA subfamily. In terms of assembly, subunit of the heterotrimeric GatCAB amidotransferase (AdT) complex, composed of A, B and C subunits.

Its subcellular location is the mitochondrion. The protein resides in the plastid. It localises to the chloroplast stroma. The catalysed reaction is L-glutamyl-tRNA(Gln) + L-glutamine + ATP + H2O = L-glutaminyl-tRNA(Gln) + L-glutamate + ADP + phosphate + H(+). Its function is as follows. Allows the formation of correctly charged Gln-tRNA(Gln) through the transamidation of misacylated Glu-tRNA(Gln) in chloroplasts and mitochondria. The reaction takes place in the presence of glutamine and ATP through an activated gamma-phospho-Glu-tRNA(Gln). The protein is Glutamyl-tRNA(Gln) amidotransferase subunit A, chloroplastic/mitochondrial of Zea mays (Maize).